A 188-amino-acid polypeptide reads, in one-letter code: MLELNAKTTALVVIDLQEGILPFAGGPHTADEVVNRAGKLAAKFRASGQPVFLVRVGWSADYAEALKQPVDAPSPAKVLPENWWQHPAALGATDSDIEIIKRQWGAFYGTDLELQLRRRGIDTIVLCGISTNIGVESTARNAWELGFNLVIAEDACSAASAEQHNNSINHIYPRIARVRSVEEILNAL.

This sequence belongs to the isochorismatase family.

This is an uncharacterized protein from Escherichia coli O157:H7.